Reading from the N-terminus, the 354-residue chain is Protein-arginine kinase (354 aa).

A Phosphagen kinase C-terminal domain is found at 24–254 (IVLSSRIRLA…QQIIQQEKMA (231 aa)). Residues 27-31 (SSRIR), histidine 92, arginine 125, 176-180 (RASVM), and 207-212 (RGIYGE) each bind ATP. The RDXXRA motif of the pArg binding pocket involved in allosteric regulation motif lies at 337 to 342 (RDYRRA).

The protein belongs to the ATP:guanido phosphotransferase family.

The catalysed reaction is L-arginyl-[protein] + ATP = N(omega)-phospho-L-arginyl-[protein] + ADP + H(+). With respect to regulation, appears to be allosterically activated by the binding of pArg-containing polypeptides to the pArg-binding pocket localized in the C-terminal domain of McsB. Catalyzes the specific phosphorylation of arginine residues in a large number of proteins. Is part of the bacterial stress response system. Protein arginine phosphorylation has a physiologically important role and is involved in the regulation of many critical cellular processes, such as protein homeostasis, motility, competence, and stringent and stress responses, by regulating gene expression and protein activity. In Bacillus thuringiensis subsp. konkukian (strain 97-27), this protein is Protein-arginine kinase.